The sequence spans 1179 residues: Integrin alpha-E (1179 aa).

An N-terminal signal peptide occupies residues 1-18 (MWLFHTLLCIASLALLAA). Residues 19–1124 (FNVDVARPWL…VFLKDEKYHS (1106 aa)) lie on the Extracellular side of the membrane. 2 FG-GAP repeats span residues 22 to 79 (DVAR…EILC) and 80 to 138 (HPVE…PQAQ). Residue asparagine 49 is glycosylated (N-linked (GlcNAc...) asparagine). Cystine bridges form between cysteine 70/cysteine 79 and cysteine 126/cysteine 159. The X-domain (extra domain) stretch occupies residues 145-199 (ENLLDPDARVDTGDCYSNKEGGGEDDVNTARQRRALEKEEEEDKEEEEDEEEEEA). Residues 158-200 (DCYSNKEGGGEDDVNTARQRRALEKEEEEDKEEEEDEEEEEAG) form a disordered region. Acidic residues predominate over residues 182-200 (KEEEEDKEEEEDEEEEEAG). Positions 200-389 (GTEIAIILDG…SKLRYNIISM (190 aa)) constitute a VWFA domain. N-linked (GlcNAc...) asparagine glycans are attached at residues asparagine 271 and asparagine 321. Residues 390–442 (EGTVGDALHYQLAQIGFSAQILDERQVLLGAVGAFDWSGGALLYDTRSRRGRF) form an FG-GAP 3 repeat. Residue asparagine 444 is glycosylated (N-linked (GlcNAc...) asparagine). FG-GAP repeat units lie at residues 447–499 (AAAA…GREA), 500–560 (SFLP…DGSF), 563–627 (ARIL…GLSA), and 631–691 (QRIR…FTPS). Residues aspartate 522, aspartate 524, aspartate 526, aspartate 530, aspartate 586, serine 588, aspartate 590, aspartate 594, aspartate 654, serine 656, aspartate 658, and aspartate 662 each coordinate Ca(2+). A disulfide bridge links cysteine 706 with cysteine 762. 2 N-linked (GlcNAc...) asparagine glycosylation sites follow: asparagine 726 and asparagine 782. Cysteine 823 and cysteine 829 are joined by a disulfide. An N-linked (GlcNAc...) asparagine glycan is attached at asparagine 857. Residues cysteine 893 and cysteine 907 are joined by a disulfide bond. Residues asparagine 934 and asparagine 954 are each glycosylated (N-linked (GlcNAc...) asparagine). 2 cysteine pairs are disulfide-bonded: cysteine 1008/cysteine 1033 and cysteine 1041/cysteine 1057. 2 N-linked (GlcNAc...) asparagine glycosylation sites follow: asparagine 1065 and asparagine 1096. Residues 1125–1147 (LPIIIKGSVGGLLVLIVILVILF) traverse the membrane as a helical segment. Residues 1148-1179 (KCGFFKRKYQQLNLESIRKAQLKSENLLEEEN) are Cytoplasmic-facing. Positions 1150–1154 (GFFKR) match the GFFKR motif motif.

It belongs to the integrin alpha chain family. Heterodimer of an alpha and a beta subunit. The alpha subunit is composed of a heavy and a light chains linked by a disulfide bond. Alpha-E associates with beta-7. As to expression, expressed on a subclass of T-lymphocytes known as intra-epithelial lymphocytes which are located between mucosal epithelial cells.

It localises to the membrane. In terms of biological role, integrin alpha-E/beta-7 is a receptor for E-cadherin. It mediates adhesion of intra-epithelial T-lymphocytes to epithelial cell monolayers. This Homo sapiens (Human) protein is Integrin alpha-E (ITGAE).